The chain runs to 341 residues: Aspartate carbamoyltransferase catalytic subunit (341 aa).

Positions 74 and 75 each coordinate carbamoyl phosphate. Lysine 102 lines the L-aspartate pocket. Residues arginine 124, histidine 152, and glutamine 155 each contribute to the carbamoyl phosphate site. L-aspartate is bound by residues arginine 190 and arginine 244. Residues glycine 285 and proline 286 each contribute to the carbamoyl phosphate site.

It belongs to the aspartate/ornithine carbamoyltransferase superfamily. ATCase family. Heterododecamer (2C3:3R2) of six catalytic PyrB chains organized as two trimers (C3), and six regulatory PyrI chains organized as three dimers (R2).

It carries out the reaction carbamoyl phosphate + L-aspartate = N-carbamoyl-L-aspartate + phosphate + H(+). The protein operates within pyrimidine metabolism; UMP biosynthesis via de novo pathway; (S)-dihydroorotate from bicarbonate: step 2/3. Functionally, catalyzes the condensation of carbamoyl phosphate and aspartate to form carbamoyl aspartate and inorganic phosphate, the committed step in the de novo pyrimidine nucleotide biosynthesis pathway. This is Aspartate carbamoyltransferase catalytic subunit from Novosphingobium aromaticivorans (strain ATCC 700278 / DSM 12444 / CCUG 56034 / CIP 105152 / NBRC 16084 / F199).